The sequence spans 509 residues: L-arabinose isomerase (509 aa).

Residues E313, E340, H357, and H456 each contribute to the Mn(2+) site.

The protein belongs to the arabinose isomerase family. Requires Mn(2+) as cofactor.

The catalysed reaction is beta-L-arabinopyranose = L-ribulose. It participates in carbohydrate degradation; L-arabinose degradation via L-ribulose; D-xylulose 5-phosphate from L-arabinose (bacterial route): step 1/3. Catalyzes the conversion of L-arabinose to L-ribulose. The sequence is that of L-arabinose isomerase from Phocaeicola vulgatus (strain ATCC 8482 / DSM 1447 / JCM 5826 / CCUG 4940 / NBRC 14291 / NCTC 11154) (Bacteroides vulgatus).